A 209-amino-acid chain; its full sequence is Small ribosomal subunit protein uS4 (209 aa).

The disordered stretch occupies residues 23–46; it reads SRNPLLKKPHPPGQHGMQRKKKSD. One can recognise an S4 RNA-binding domain in the interval 93–156; that stretch reads CRLDNMVYRM…RKLQSVQESL (64 aa).

This sequence belongs to the universal ribosomal protein uS4 family. As to quaternary structure, part of the 30S ribosomal subunit. Contacts protein S5. The interaction surface between S4 and S5 is involved in control of translational fidelity.

Functionally, one of the primary rRNA binding proteins, it binds directly to 16S rRNA where it nucleates assembly of the body of the 30S subunit. Its function is as follows. With S5 and S12 plays an important role in translational accuracy. The chain is Small ribosomal subunit protein uS4 from Chlamydia caviae (strain ATCC VR-813 / DSM 19441 / 03DC25 / GPIC) (Chlamydophila caviae).